The sequence spans 428 residues: Gamma-glutamyl phosphate reductase (428 aa).

The protein belongs to the gamma-glutamyl phosphate reductase family.

The protein resides in the cytoplasm. The enzyme catalyses L-glutamate 5-semialdehyde + phosphate + NADP(+) = L-glutamyl 5-phosphate + NADPH + H(+). It functions in the pathway amino-acid biosynthesis; L-proline biosynthesis; L-glutamate 5-semialdehyde from L-glutamate: step 2/2. Functionally, catalyzes the NADPH-dependent reduction of L-glutamate 5-phosphate into L-glutamate 5-semialdehyde and phosphate. The product spontaneously undergoes cyclization to form 1-pyrroline-5-carboxylate. This Mesorhizobium japonicum (strain LMG 29417 / CECT 9101 / MAFF 303099) (Mesorhizobium loti (strain MAFF 303099)) protein is Gamma-glutamyl phosphate reductase.